Consider the following 384-residue polypeptide: SAGA complex subunit Spt3 (384 aa).

Belongs to the SPT3 family. In terms of assembly, component of the Spt-Ada-Gcn5 acetyltransferase (SAGA) complex consisting of wda/Taf5L, Saf6, Taf9, Taf10b, Taf12, Ada1, Spt3, Spt7, Spt20, Sf3b3, Sf3b5, Nipped-A/Tra1, a histone acetyltransferase (HAT) module made up of Gcn5, Ada2b (Isoform B), Ada3 and Sgf29, and a deubiquitinase (DUB) module made up of not/nonstop, Sgf11 and e(y)2 tethered to SAGA by Atxn7. Taf5 and Taf10, which has partially redundant properties with Taf10b, may also be part of this complex.

Its subcellular location is the nucleus. It is found in the chromosome. Component of the transcription regulatory complex SAGA, a multiprotein complex that activates transcription by remodeling chromatin and mediating histone acetylation and deubiquitination. The SAGA complex predominantly acetylates histone H3. Required for oogenesis; involved in transcriptional activation. This is SAGA complex subunit Spt3 from Drosophila melanogaster (Fruit fly).